The chain runs to 277 residues: Shikimate dehydrogenase (NADP(+)) (277 aa).

Shikimate-binding positions include 15-17 and threonine 62; that span reads SLS. Catalysis depends on lysine 66, which acts as the Proton acceptor. Shikimate-binding residues include asparagine 87 and aspartate 102. NADP(+)-binding positions include 127–131, 151–156, and isoleucine 219; these read GAGGA and NRTVDK. Tyrosine 221 serves as a coordination point for shikimate. Glycine 242 is a binding site for NADP(+).

It belongs to the shikimate dehydrogenase family. In terms of assembly, homodimer.

The enzyme catalyses shikimate + NADP(+) = 3-dehydroshikimate + NADPH + H(+). It participates in metabolic intermediate biosynthesis; chorismate biosynthesis; chorismate from D-erythrose 4-phosphate and phosphoenolpyruvate: step 4/7. In terms of biological role, involved in the biosynthesis of the chorismate, which leads to the biosynthesis of aromatic amino acids. Catalyzes the reversible NADPH linked reduction of 3-dehydroshikimate (DHSA) to yield shikimate (SA). The sequence is that of Shikimate dehydrogenase (NADP(+)) from Bacillus cereus (strain G9842).